Consider the following 430-residue polypeptide: Tol-Pal system protein TolB (430 aa).

A signal peptide spans 1–21; the sequence is MRRFVTLLIALLCLSATAVQA.

The protein belongs to the TolB family. As to quaternary structure, the Tol-Pal system is composed of five core proteins: the inner membrane proteins TolA, TolQ and TolR, the periplasmic protein TolB and the outer membrane protein Pal. They form a network linking the inner and outer membranes and the peptidoglycan layer.

The protein resides in the periplasm. In terms of biological role, part of the Tol-Pal system, which plays a role in outer membrane invagination during cell division and is important for maintaining outer membrane integrity. The protein is Tol-Pal system protein TolB of Syntrophotalea carbinolica (strain DSM 2380 / NBRC 103641 / GraBd1) (Pelobacter carbinolicus).